The sequence spans 117 residues: Large ribosomal subunit protein uL18 (117 aa).

Belongs to the universal ribosomal protein uL18 family. In terms of assembly, part of the 50S ribosomal subunit; part of the 5S rRNA/L5/L18/L25 subcomplex. Contacts the 5S and 23S rRNAs.

Its function is as follows. This is one of the proteins that bind and probably mediate the attachment of the 5S RNA into the large ribosomal subunit, where it forms part of the central protuberance. The chain is Large ribosomal subunit protein uL18 from Aeromonas salmonicida (strain A449).